The sequence spans 282 residues: Undecaprenyl-diphosphatase (282 aa).

Transmembrane regions (helical) follow at residues 39–59, 85–105, 115–135, 153–173, 196–216, 230–250, and 260–280; these read PGAAFTAIVQMGTLAAVLIYF, ATMGWMIAAGTIPIVFFGLLF, SLYWISAALIGLALILWLTEV, IGWKEALLIGVAQSIALIPGS, FSFLLSLPSVLAAALLQLYET, LLVATIAAGVVGYASIAFLIT, and FIIYRIVIGVAILGLIATGAI.

Belongs to the UppP family.

It is found in the cell inner membrane. It carries out the reaction di-trans,octa-cis-undecaprenyl diphosphate + H2O = di-trans,octa-cis-undecaprenyl phosphate + phosphate + H(+). In terms of biological role, catalyzes the dephosphorylation of undecaprenyl diphosphate (UPP). Confers resistance to bacitracin. In Chlorobium chlorochromatii (strain CaD3), this protein is Undecaprenyl-diphosphatase.